Reading from the N-terminus, the 299-residue chain is Porphobilinogen deaminase (299 aa).

Residue cysteine 234 is modified to S-(dipyrrolylmethanemethyl)cysteine.

The protein belongs to the HMBS family. Monomer. Requires dipyrromethane as cofactor.

It catalyses the reaction 4 porphobilinogen + H2O = hydroxymethylbilane + 4 NH4(+). It functions in the pathway porphyrin-containing compound metabolism; protoporphyrin-IX biosynthesis; coproporphyrinogen-III from 5-aminolevulinate: step 2/4. In terms of biological role, tetrapolymerization of the monopyrrole PBG into the hydroxymethylbilane pre-uroporphyrinogen in several discrete steps. The chain is Porphobilinogen deaminase from Corynebacterium efficiens (strain DSM 44549 / YS-314 / AJ 12310 / JCM 11189 / NBRC 100395).